The sequence spans 306 residues: Putative F-box protein At1g47300 (306 aa).

In terms of domain architecture, F-box spans methionine 1–leucine 45. A disordered region spans residues aspartate 235–lysine 278. The segment covering lysine 242–glutamate 270 has biased composition (acidic residues).

The chain is Putative F-box protein At1g47300 from Arabidopsis thaliana (Mouse-ear cress).